Consider the following 64-residue polypeptide: U9-ctenitoxin-Pr1a (64 aa).

Disulfide bonds link cysteine 3–cysteine 15, cysteine 9–cysteine 24, cysteine 14–cysteine 47, cysteine 34–cysteine 55, and cysteine 49–cysteine 61.

As to expression, expressed by the venom gland.

Its subcellular location is the secreted. Its function is as follows. Non-toxic to mice and insects. This Phoneutria reidyi (Brazilian Amazonian armed spider) protein is U9-ctenitoxin-Pr1a.